Reading from the N-terminus, the 245-residue chain is 4-hydroxy-tetrahydrodipicolinate reductase (245 aa).

NAD(+) contacts are provided by residues 7 to 12, 75 to 77, and 102 to 105; these read GAKGKV, GTT, and APNF. His132 functions as the Proton donor/acceptor in the catalytic mechanism. (S)-2,3,4,5-tetrahydrodipicolinate is bound at residue His133. Catalysis depends on Lys136, which acts as the Proton donor. 142–143 lines the (S)-2,3,4,5-tetrahydrodipicolinate pocket; sequence GT.

Belongs to the DapB family.

The protein resides in the cytoplasm. The enzyme catalyses (S)-2,3,4,5-tetrahydrodipicolinate + NAD(+) + H2O = (2S,4S)-4-hydroxy-2,3,4,5-tetrahydrodipicolinate + NADH + H(+). The catalysed reaction is (S)-2,3,4,5-tetrahydrodipicolinate + NADP(+) + H2O = (2S,4S)-4-hydroxy-2,3,4,5-tetrahydrodipicolinate + NADPH + H(+). It functions in the pathway amino-acid biosynthesis; L-lysine biosynthesis via DAP pathway; (S)-tetrahydrodipicolinate from L-aspartate: step 4/4. Catalyzes the conversion of 4-hydroxy-tetrahydrodipicolinate (HTPA) to tetrahydrodipicolinate. This chain is 4-hydroxy-tetrahydrodipicolinate reductase, found in Mycolicibacterium gilvum (strain PYR-GCK) (Mycobacterium gilvum (strain PYR-GCK)).